A 219-amino-acid polypeptide reads, in one-letter code: PKHD-type hydroxylase SYNPCC7002_A2658 (219 aa).

The Fe2OG dioxygenase domain occupies 78–172; that stretch reads TVHTLLFSRY…RLVAVGWVQS (95 aa). Fe cation-binding residues include H96, D98, and H153. R163 lines the 2-oxoglutarate pocket.

Fe(2+) serves as cofactor. Requires L-ascorbate as cofactor.

In Picosynechococcus sp. (strain ATCC 27264 / PCC 7002 / PR-6) (Agmenellum quadruplicatum), this protein is PKHD-type hydroxylase SYNPCC7002_A2658.